A 212-amino-acid polypeptide reads, in one-letter code: Peroxisomal membrane protein 4 (212 aa).

2 helical membrane-spanning segments follow: residues 97 to 117 (GGTH…LLFG) and 151 to 171 (LKWD…LWLF). An N-linked (GlcNAc...) asparagine glycan is attached at Asn-206.

This sequence belongs to the peroxisomal membrane protein PXMP2/4 family. Interacts with PEX19. In terms of tissue distribution, liver.

It localises to the peroxisome membrane. The polypeptide is Peroxisomal membrane protein 4 (Pxmp4) (Rattus norvegicus (Rat)).